A 256-amino-acid polypeptide reads, in one-letter code: Pimeloyl-[acyl-carrier protein] methyl ester esterase (256 aa).

One can recognise an AB hydrolase-1 domain in the interval 15–242; it reads HLVLLHGWGL…AAHAPFISHP (228 aa). Residues W22, 82 to 83, and 143 to 147 each bind substrate; these read SL and FLALQ. S82 functions as the Nucleophile in the catalytic mechanism. Active-site residues include D207 and H235. Position 235 (H235) interacts with substrate.

It belongs to the AB hydrolase superfamily. Carboxylesterase BioH family. In terms of assembly, monomer.

It is found in the cytoplasm. The catalysed reaction is 6-carboxyhexanoyl-[ACP] methyl ester + H2O = 6-carboxyhexanoyl-[ACP] + methanol + H(+). Its pathway is cofactor biosynthesis; biotin biosynthesis. The physiological role of BioH is to remove the methyl group introduced by BioC when the pimeloyl moiety is complete. It allows to synthesize pimeloyl-ACP via the fatty acid synthetic pathway through the hydrolysis of the ester bonds of pimeloyl-ACP esters. The sequence is that of Pimeloyl-[acyl-carrier protein] methyl ester esterase from Shigella dysenteriae serotype 1 (strain Sd197).